Reading from the N-terminus, the 92-residue chain is Small ribosomal subunit protein uS19 (92 aa).

Belongs to the universal ribosomal protein uS19 family.

Protein S19 forms a complex with S13 that binds strongly to the 16S ribosomal RNA. The protein is Small ribosomal subunit protein uS19 of Rhodospirillum rubrum (strain ATCC 11170 / ATH 1.1.1 / DSM 467 / LMG 4362 / NCIMB 8255 / S1).